The chain runs to 221 residues: Translation initiation factor 6 (221 aa).

Belongs to the eIF-6 family.

Binds to the 50S ribosomal subunit and prevents its association with the 30S ribosomal subunit to form the 70S initiation complex. This is Translation initiation factor 6 from Cenarchaeum symbiosum (strain A).